Reading from the N-terminus, the 222-residue chain is Pyridoxine/pyridoxamine 5'-phosphate oxidase (222 aa).

Residues 71 to 76 (RMVLLK), 86 to 87 (YT), Lys-93, and Gln-115 each bind FMN. Lys-76 is a substrate binding site. Substrate contacts are provided by Tyr-133, Arg-137, and Ser-141. Residues 150-151 (QS) and Trp-195 contribute to the FMN site. Position 201–203 (201–203 (RLH)) interacts with substrate. Arg-205 serves as a coordination point for FMN.

The protein belongs to the pyridoxamine 5'-phosphate oxidase family. As to quaternary structure, homodimer. Requires FMN as cofactor.

The enzyme catalyses pyridoxamine 5'-phosphate + O2 + H2O = pyridoxal 5'-phosphate + H2O2 + NH4(+). The catalysed reaction is pyridoxine 5'-phosphate + O2 = pyridoxal 5'-phosphate + H2O2. It functions in the pathway cofactor metabolism; pyridoxal 5'-phosphate salvage; pyridoxal 5'-phosphate from pyridoxamine 5'-phosphate: step 1/1. The protein operates within cofactor metabolism; pyridoxal 5'-phosphate salvage; pyridoxal 5'-phosphate from pyridoxine 5'-phosphate: step 1/1. Catalyzes the oxidation of either pyridoxine 5'-phosphate (PNP) or pyridoxamine 5'-phosphate (PMP) into pyridoxal 5'-phosphate (PLP). The sequence is that of Pyridoxine/pyridoxamine 5'-phosphate oxidase from Caulobacter vibrioides (strain ATCC 19089 / CIP 103742 / CB 15) (Caulobacter crescentus).